The following is a 195-amino-acid chain: UMP-CMP kinase (195 aa).

An ATP-binding site is contributed by 17–22 (GSGKGT). Positions 37–66 (SAGDLLRQEQQSGSKDGEMIATMIKNGEIV) are NMP. Residues Arg-43, 64–66 (EIV), and 91–94 (GFPR) contribute to the a ribonucleoside 5'-phosphate site. Position 98 (Asn-98) interacts with CMP. The tract at residues 131 to 141 (KRGESSGRSDD) is LID. Arg-132 is a binding site for ATP. Residues Arg-138 and Arg-149 each coordinate a ribonucleoside 5'-phosphate. Residue Arg-177 participates in ATP binding.

The protein belongs to the adenylate kinase family. UMP-CMP kinase subfamily. In terms of assembly, monomer. Mg(2+) is required as a cofactor.

The protein resides in the cytoplasm. It localises to the nucleus. It carries out the reaction CMP + ATP = CDP + ADP. The catalysed reaction is dCMP + ATP = dCDP + ADP. It catalyses the reaction UMP + ATP = UDP + ADP. Catalyzes the phosphorylation of pyrimidine nucleoside monophosphates at the expense of ATP. Plays an important role in de novo pyrimidine nucleotide biosynthesis. Has preference for UMP and CMP as phosphate acceptors. The sequence is that of UMP-CMP kinase from Dictyostelium discoideum (Social amoeba).